Reading from the N-terminus, the 145-residue chain is UPF0179 protein TV1250 (145 aa).

It belongs to the UPF0179 family.

This Thermoplasma volcanium (strain ATCC 51530 / DSM 4299 / JCM 9571 / NBRC 15438 / GSS1) protein is UPF0179 protein TV1250.